The following is a 623-amino-acid chain: F-box protein FBX14 (623 aa).

Positions 18–48 are disordered; it reads LNLNPPCSSSSSSSSAATFTNKSRNFKSSPP. Residues 33-45 show a composition bias toward polar residues; that stretch reads AATFTNKSRNFKS. Positions 54–97 constitute an F-box domain; that stretch reads VLENVLENVLQFLTSRCDRNAVSLVCRSWYRVEAQTRLEVFIGN. Lysine 119 is a 1D-myo-inositol hexakisphosphate binding site. The interaction with auxin-responsive proteins stretch occupies residues 126–127; sequence DF. 1D-myo-inositol hexakisphosphate-binding positions include 158-159 and arginine 391; that span reads KR. The tract at residues 394 to 399 is interaction with auxin-responsive proteins; that stretch reads PFDPRE. 447–449 serves as a coordination point for 1D-myo-inositol hexakisphosphate; the sequence is VFR. Residues 451–455 form an interaction with auxin-responsive proteins region; sequence CIMGR. Arginine 482 contributes to the 1D-myo-inositol hexakisphosphate binding site. Residues 510–511 are interaction with auxin-responsive proteins; that stretch reads AF. Residues 530-531 and arginine 555 each bind 1D-myo-inositol hexakisphosphate; that span reads QK.

Part of a SCF (SKP1-cullin-F-box) protein ligase complex. May interact with auxin and auxin-responsive proteins.

It localises to the nucleus. It functions in the pathway protein modification; protein ubiquitination. This is F-box protein FBX14 (FBX14) from Arabidopsis thaliana (Mouse-ear cress).